A 315-amino-acid chain; its full sequence is Mycothiol acetyltransferase (315 aa).

2 consecutive N-acetyltransferase domains span residues 8–145 (VETS…LPLD) and 163–315 (VSLR…DATA). Glutamate 39 lines the 1D-myo-inositol 2-(L-cysteinylamino)-2-deoxy-alpha-D-glucopyranoside pocket. Acetyl-CoA contacts are provided by residues 81–83 (LVV) and 89–94 (HHGVGT). 1D-myo-inositol 2-(L-cysteinylamino)-2-deoxy-alpha-D-glucopyranoside-binding residues include glutamate 190, lysine 229, and glutamate 243. 247 to 249 (LGV) contacts acetyl-CoA. Tyrosine 281 contacts 1D-myo-inositol 2-(L-cysteinylamino)-2-deoxy-alpha-D-glucopyranoside. An acetyl-CoA-binding site is contributed by 286-291 (NTVAIR).

This sequence belongs to the acetyltransferase family. MshD subfamily. Monomer.

The enzyme catalyses 1D-myo-inositol 2-(L-cysteinylamino)-2-deoxy-alpha-D-glucopyranoside + acetyl-CoA = mycothiol + CoA + H(+). In terms of biological role, catalyzes the transfer of acetyl from acetyl-CoA to desacetylmycothiol (Cys-GlcN-Ins) to form mycothiol. The sequence is that of Mycothiol acetyltransferase from Sanguibacter keddieii (strain ATCC 51767 / DSM 10542 / NCFB 3025 / ST-74).